We begin with the raw amino-acid sequence, 459 residues long: DnaJ homolog subfamily A member 1 homolog (459 aa).

The J domain occupies 6-73; that stretch reads EYYERLGVKP…EKRKMYDSYG (68 aa). The segment at 158-243 adopts a CR-type zinc-finger fold; it reads GKLVKISISR…CKGKRVIQGK (86 aa). Residues Cys171, Cys174, Cys188, Cys191, Cys215, Cys218, Cys231, and Cys234 each coordinate Zn(2+). CXXCXGXG motif repeat units lie at residues 171 to 178, 188 to 195, 215 to 222, and 231 to 238; these read CKTCKGSG, CPTCNGSR, CHTCHGTG, and CKECKGKR. The disordered stretch occupies residues 405–459; sequence NTNEQSSHGGAGGAYQQHGGAYGHQKQQQQGFNPADFGAQFGGGGPQQAQQCQQQ. The segment covering 418–435 has biased composition (low complexity); sequence AYQQHGGAYGHQKQQQQG. Cys456 is subject to Cysteine methyl ester. Cys456 carries the S-farnesyl cysteine lipid modification. Residues 457 to 459 constitute a propeptide, removed in mature form; sequence QQQ.

The protein localises to the membrane. It localises to the cytoplasm. The protein resides in the microsome. It is found in the mitochondrion. Its subcellular location is the nucleus. The protein localises to the perinuclear region. Functionally, co-chaperone for Hsp70 family members. Plays a role in protein transport into mitochondria and in the regulation of apoptosis via its role as co-chaperone. The polypeptide is DnaJ homolog subfamily A member 1 homolog (dnaja1) (Dictyostelium discoideum (Social amoeba)).